The following is a 161-amino-acid chain: Troponin C, slow skeletal and cardiac muscles (161 aa).

The residue at position 1 (Met1) is an N-acetylmethionine. EF-hand domains lie at 16–51 (QKNEFKAAFDIFVLGAEDGCISTKELGKVMRMLGQN), 52–87 (PTPEELQEMIDEVDEDGSGTVDFDQFLVMMVRCMKD), 92–127 (KTEEELSDLFRMFDKNADGYIDLEELKIMLQATGET), and 128–161 (ITEDDIEELMKDGNKNNDGRIDYDEFLQFMKGVE). Asp65, Asp67, Ser69, Thr71, Asp105, Asn107, Asp109, Tyr111, Glu116, Asn143, Asp145, Arg147, and Glu152 together coordinate Ca(2+).

Belongs to the troponin C family.

Troponin is the central regulatory protein of striated muscle contraction. Tn consists of three components: Tn-I which is the inhibitor of actomyosin ATPase, Tn-T which contains the binding site for tropomyosin and Tn-C. The binding of calcium to Tn-C abolishes the inhibitory action of Tn on actin filaments. The polypeptide is Troponin C, slow skeletal and cardiac muscles (TNNC1) (Coturnix japonica (Japanese quail)).